The following is a 431-amino-acid chain: Sulfide dehydrogenase [flavocytochrome c] flavoprotein chain (431 aa).

Positions 1–30 (MTLNRRDFIKTSGAAVAAVGILGFPHLAFG) form a signal peptide, tat-type signal. 70–76 (YTCYLSN) contacts FAD. An intrachain disulfide couples C191 to C367.

As to quaternary structure, dimer of one cytochrome and one flavoprotein. In terms of processing, predicted to be exported by the Tat system. The position of the signal peptide cleavage has been experimentally proven.

It is found in the periplasm. It carries out the reaction hydrogen sulfide + 2 Fe(III)-[cytochrome c] = sulfur + 2 Fe(II)-[cytochrome c] + H(+). This Allochromatium vinosum (strain ATCC 17899 / DSM 180 / NBRC 103801 / NCIMB 10441 / D) (Chromatium vinosum) protein is Sulfide dehydrogenase [flavocytochrome c] flavoprotein chain (fccB).